The chain runs to 326 residues: Acyl-CoA-binding domain-containing protein 4 (326 aa).

In terms of domain architecture, ACB spans 10–99 (CQKQFQAAVS…MKLVAQKVID (90 aa)). An acyl-CoA contacts are provided by residues 21–30 (IQNLPKNGSY), 41–45 (YSYYK), lysine 67, and tyrosine 86. 2 disordered regions span residues 147 to 170 (VQAA…SRLP) and 223 to 248 (KEAA…SLMG). Serine 164 carries the post-translational modification Phosphoserine.

In terms of biological role, binds medium- and long-chain acyl-CoA esters and may function as an intracellular carrier of acyl-CoA esters. The polypeptide is Acyl-CoA-binding domain-containing protein 4 (Acbd4) (Rattus norvegicus (Rat)).